The chain runs to 103 residues: MSLLEQVSVSKKANIYFDGKVASRSVFFADGSKQTLGVVQPGEYEFSTSQGEIMEVISGRFEVLLPETTTWQEFSEGTQFELAANVSFKIRNTAIAEYCCSYL.

Belongs to the nucleoside phosphorylase PpnP family.

The catalysed reaction is a purine D-ribonucleoside + phosphate = a purine nucleobase + alpha-D-ribose 1-phosphate. It carries out the reaction adenosine + phosphate = alpha-D-ribose 1-phosphate + adenine. The enzyme catalyses cytidine + phosphate = cytosine + alpha-D-ribose 1-phosphate. It catalyses the reaction guanosine + phosphate = alpha-D-ribose 1-phosphate + guanine. The catalysed reaction is inosine + phosphate = alpha-D-ribose 1-phosphate + hypoxanthine. It carries out the reaction thymidine + phosphate = 2-deoxy-alpha-D-ribose 1-phosphate + thymine. The enzyme catalyses uridine + phosphate = alpha-D-ribose 1-phosphate + uracil. It catalyses the reaction xanthosine + phosphate = alpha-D-ribose 1-phosphate + xanthine. Catalyzes the phosphorolysis of diverse nucleosides, yielding D-ribose 1-phosphate and the respective free bases. Can use uridine, adenosine, guanosine, cytidine, thymidine, inosine and xanthosine as substrates. Also catalyzes the reverse reactions. This chain is Pyrimidine/purine nucleoside phosphorylase, found in Shewanella baltica (strain OS195).